The chain runs to 203 residues: ATP-dependent Clp protease proteolytic subunit (203 aa).

S100 (nucleophile) is an active-site residue. The active site involves H125.

This sequence belongs to the peptidase S14 family. In terms of assembly, component of the chloroplastic Clp protease core complex.

Its subcellular location is the plastid. The protein resides in the chloroplast stroma. The catalysed reaction is Hydrolysis of proteins to small peptides in the presence of ATP and magnesium. alpha-casein is the usual test substrate. In the absence of ATP, only oligopeptides shorter than five residues are hydrolyzed (such as succinyl-Leu-Tyr-|-NHMec, and Leu-Tyr-Leu-|-Tyr-Trp, in which cleavage of the -Tyr-|-Leu- and -Tyr-|-Trp bonds also occurs).. Its function is as follows. Cleaves peptides in various proteins in a process that requires ATP hydrolysis. Has a chymotrypsin-like activity. Plays a major role in the degradation of misfolded proteins. The polypeptide is ATP-dependent Clp protease proteolytic subunit (Dioscorea elephantipes (Elephant's foot yam)).